We begin with the raw amino-acid sequence, 119 residues long: EF-hand calcium-binding domain-containing protein 2 (119 aa).

The first 22 residues, 1 to 22 (MKVAVVLIVVLVVMMIGQETDS), serve as a signal peptide directing secretion. Residues 82-117 (VDDNGFVEFKATYDVDGDGVVQVEEYETVVELTENL) form the EF-hand domain. Residues Asp95, Asp97, Asp99, and Glu106 each contribute to the Ca(2+) site.

As to expression, component of the acid-soluble organic matrix of calcified layers of the shell (at protein level).

The protein resides in the secreted. The protein is EF-hand calcium-binding domain-containing protein 2 of Lottia gigantea (Giant owl limpet).